The sequence spans 628 residues: FAD-linked oxidoreductase easE (628 aa).

The first 20 residues, 1-20 (MSHRILCVAFCVCSLVAVSS), serve as a signal peptide directing secretion. Residues 144-328 (HQGRIPLYSA…TRATMRVHLN (185 aa)) enclose the FAD-binding PCMH-type domain. Histidine 182 is subject to Pros-8alpha-FAD histidine. Residues asparagine 343, asparagine 382, and asparagine 487 are each glycosylated (N-linked (GlcNAc...) asparagine).

This sequence belongs to the oxygen-dependent FAD-linked oxidoreductase family. It depends on FAD as a cofactor.

Its pathway is alkaloid biosynthesis; ergot alkaloid biosynthesis. In terms of biological role, FAD binding oxidoreductase; part of the gene cluster that mediates the biosynthesis of fumiclavanine C, a fungal ergot alkaloid. DmaW catalyzes the first step of ergot alkaloid biosynthesis by condensing dimethylallyl diphosphate (DMAP) and tryptophan to form 4-dimethylallyl-L-tryptophan. The second step is catalyzed by the methyltransferase easF that methylates 4-dimethylallyl-L-tryptophan in the presence of S-adenosyl-L-methionine, resulting in the formation of 4-dimethylallyl-L-abrine. The catalase easC and the FAD-dependent oxidoreductase easE then transform 4-dimethylallyl-L-abrine to chanoclavine-I which is further oxidized by EasD in the presence of NAD(+), resulting in the formation of chanoclavine-I aldehyde. EasA reduces chanoclavine-I aldehyde to dihydrochanoclavine-I aldehyde that spontaneously dehydrates to form 6,8-dimethyl-6,7-didehydroergoline. EasG then catalyzes the reduction of 6,8-dimethyl-6,7-didehydroergoline to form festuclavine. Hydrolysis of festuclavine by easM then leads to the formation of fumigaclavine B which is in turn acetylated by easN to fumigaclavine A. Finally, easL catalyzes the conversion of fumigaclavine A into fumigaclavine C by attaching a dimethylallyl moiety to C-2 of the indole nucleus. The protein is FAD-linked oxidoreductase easE of Aspergillus fumigatus (strain ATCC MYA-4609 / CBS 101355 / FGSC A1100 / Af293) (Neosartorya fumigata).